The following is a 495-amino-acid chain: Glutamate--tRNA ligase (495 aa).

A 'HIGH' region motif is present at residues proline 13–leucine 23. A 'KMSKS' region motif is present at residues lysine 257 to arginine 261. Residue lysine 260 participates in ATP binding.

This sequence belongs to the class-I aminoacyl-tRNA synthetase family. Glutamate--tRNA ligase type 1 subfamily. As to quaternary structure, monomer.

It is found in the cytoplasm. It catalyses the reaction tRNA(Glu) + L-glutamate + ATP = L-glutamyl-tRNA(Glu) + AMP + diphosphate. Its function is as follows. Catalyzes the attachment of glutamate to tRNA(Glu) in a two-step reaction: glutamate is first activated by ATP to form Glu-AMP and then transferred to the acceptor end of tRNA(Glu). The sequence is that of Glutamate--tRNA ligase from Mycolicibacterium vanbaalenii (strain DSM 7251 / JCM 13017 / BCRC 16820 / KCTC 9966 / NRRL B-24157 / PYR-1) (Mycobacterium vanbaalenii).